Consider the following 479-residue polypeptide: MNYLNENIDSLNKKLQDGEITAEDLAKETVKNIKETDKKINAWITVDDDAKPAENLDFAKNKLAGIPIAIKDNIITNGMKTTAASHILCNYMPVYDATVISKLKKAQATFVGKTNMDEFAMGSSTEHSYYGATRNPWDLEKVPGGSSGGSAAAVASGEVVAALGSDTGGSIRQPAAFNGIFGIKPTYGRVSRWGLIAFGSSLDQIGVMSKRVKDSAEVLNVIAGPDEHDATVSEKEVPDFTSFLGQDVKGLRVAVPKEYMDAVDGEMRDAIQKQIDVLKDAGAVINEVSLPHTKYVVPTYYIVASSEASSNLQRYDGIRYGYRAKDTKNLLDVYVKSRSEGFGDEVKRRIMLGSFALSAGAYDEFFKKAAQVRTLICRDFEKIFEENDVIVGPTTTEPAFGIGEEISDPIKMYNNDILTISANLAGIPAASVPAGLVDGMPAGLQIMAKRFDEGTVFKVADFIERNNKFYEKTPTGMED.

Active-site charge relay system residues include Lys71 and Ser146. The active-site Acyl-ester intermediate is Ser170.

The protein belongs to the amidase family. GatA subfamily. Heterotrimer of A, B and C subunits.

The catalysed reaction is L-glutamyl-tRNA(Gln) + L-glutamine + ATP + H2O = L-glutaminyl-tRNA(Gln) + L-glutamate + ADP + phosphate + H(+). Functionally, allows the formation of correctly charged Gln-tRNA(Gln) through the transamidation of misacylated Glu-tRNA(Gln) in organisms which lack glutaminyl-tRNA synthetase. The reaction takes place in the presence of glutamine and ATP through an activated gamma-phospho-Glu-tRNA(Gln). This Lactobacillus gasseri (strain ATCC 33323 / DSM 20243 / BCRC 14619 / CIP 102991 / JCM 1131 / KCTC 3163 / NCIMB 11718 / NCTC 13722 / AM63) protein is Glutamyl-tRNA(Gln) amidotransferase subunit A.